Here is a 284-residue protein sequence, read N- to C-terminus: ATP synthase subunit a (284 aa).

A run of 5 helical transmembrane segments spans residues 47-67, 108-128, 156-176, 233-253, and 254-274; these read AFHL…LIFF, VAPL…MDLV, VPTA…ILII, MIFI…SLPW, and AIFH…LVIV.

Belongs to the ATPase A chain family. As to quaternary structure, F-type ATPases have 2 components, CF(1) - the catalytic core - and CF(0) - the membrane proton channel. CF(1) has five subunits: alpha(3), beta(3), gamma(1), delta(1), epsilon(1). CF(0) has three main subunits: a(1), b(2) and c(9-12). The alpha and beta chains form an alternating ring which encloses part of the gamma chain. CF(1) is attached to CF(0) by a central stalk formed by the gamma and epsilon chains, while a peripheral stalk is formed by the delta and b chains.

Its subcellular location is the cell inner membrane. Its function is as follows. Key component of the proton channel; it plays a direct role in the translocation of protons across the membrane. The polypeptide is ATP synthase subunit a (Ruthia magnifica subsp. Calyptogena magnifica).